Consider the following 521-residue polypeptide: MSL complex subunit 3 (521 aa).

In terms of domain architecture, Tudor-knot spans 13-71 (SGEKVLCFEPDPTKARVLYDAKIVDVIVGKDEKGRKIPEYLIHFNGWNRSWDRWAAEDH). Disordered regions lie at residues 114–166 (KGLP…TRRE) and 298–409 (ATST…PSKE). The segment covering 139–149 (KDEEISEESDI) has biased composition (acidic residues). Positions 150–166 (EEKTEVKEEPELQTRRE) are enriched in basic and acidic residues. The region spanning 168–517 (EERTITIEIP…CEAHYSTKNP (350 aa)) is the MRG domain. The required for the histone acetyltransferase activity of the MSL complex stretch occupies residues 290–440 (FFLPIKESAT…WKLVPDNYPP (151 aa)). Residues Ser-309 and Ser-311 each carry the phosphoserine modification. Residues 316–329 (NPSTPQSTESQPTT) are compositionally biased toward low complexity. Phosphoserine is present on residues Ser-367 and Ser-400. Thr-405 carries the post-translational modification Phosphothreonine. A phosphoserine mark is found at Ser-407 and Ser-411.

As to quaternary structure, component of the MSL histone acetyltransferase complex at least composed of the KAT8/MOF, MSL1/hampin, MSL2 and MSL3. Interacts (via the MRG domain) with MSL1 and KAT8/MOF. In terms of tissue distribution, expressed in many tissues including liver, pancreas, heart, lung, kidney, skeletal muscle, brain, and placenta, with highest expression in skeletal muscle and heart.

It localises to the nucleus. Non-catalytic component of the MSL histone acetyltransferase complex, a multiprotein complex that mediates the majority of histone H4 acetylation at 'Lys-16' (H4K16ac), an epigenetic mark that prevents chromatin compaction. The MSL complex is required for chromosome stability and genome integrity by maintaining homeostatic levels of H4K16ac. The MSL complex is also involved in gene dosage by promoting up-regulation of genes expressed by the X chromosome. X up-regulation is required to compensate for autosomal biallelic expression. The MSL complex also participates in gene dosage compensation by promoting expression of Tsix non-coding RNA. Acts as a histone reader that specifically recognizes and binds histone H4 monomethylated at 'Lys-20' (H4K20Me1) in a DNA-dependent manner and is proposed to be involved in chromosomal targeting of the MSL complex. May play a role X inactivation in females. The protein is MSL complex subunit 3 of Homo sapiens (Human).